A 295-amino-acid chain; its full sequence is Protein U26 (295 aa).

A run of 8 helical transmembrane segments spans residues 4–24 (LTDSFILGLAKGAVIPGLYTF), 31–51 (SPLGQIGVLITVAISFLLTFK), 66–86 (IVFLSLMAPKLPSLLSAVVMI), 103–123 (VMIMPSYSPAVFTGIMVSLFF), 183–203 (FTVEFLLLFTMLWIGKMFLSM), 218–238 (VFFKLNVFKAAACAVVAILSG), 243–263 (VCLYRIIFEAFVGLGFSSIML), and 274–294 (FYAGDLLNGFFCLVVCCMYFG).

It is found in the membrane. This Human herpesvirus 6A (strain Uganda-1102) (HHV-6 variant A) protein is Protein U26 (U26).